Reading from the N-terminus, the 618-residue chain is Sulfite reductase [NADPH] flavoprotein alpha-component (618 aa).

The Flavodoxin-like domain maps to 64 to 202 (VTLISASQTG…QAQQWRQQVV (139 aa)). Residues 70–75 (SQTGNA), 117–120 (STQG), and 153–162 (LGDTSYEHFC) contribute to the FMN site. Residues 253–467 (TAPLTAQLSV…IEHNDNFRLP (215 aa)) form the FAD-binding FR-type domain. FAD-binding positions include Thr-341, Lys-375, 405-408 (RLYS), 423-425 (TVG), Tyr-429, and 438-441 (GGAS). Residues 538 to 539 (SR), 544 to 548 (KIYVQ), and Asp-580 contribute to the NADP(+) site. Tyr-618 contributes to the FAD binding site.

This sequence belongs to the NADPH-dependent sulphite reductase flavoprotein subunit CysJ family. In the N-terminal section; belongs to the flavodoxin family. It in the C-terminal section; belongs to the flavoprotein pyridine nucleotide cytochrome reductase family. Alpha(8)-beta(8). The alpha component is a flavoprotein, the beta component is a hemoprotein. It depends on FAD as a cofactor. FMN is required as a cofactor.

It catalyses the reaction hydrogen sulfide + 3 NADP(+) + 3 H2O = sulfite + 3 NADPH + 4 H(+). The protein operates within sulfur metabolism; hydrogen sulfide biosynthesis; hydrogen sulfide from sulfite (NADPH route): step 1/1. Its function is as follows. Component of the sulfite reductase complex that catalyzes the 6-electron reduction of sulfite to sulfide. This is one of several activities required for the biosynthesis of L-cysteine from sulfate. The flavoprotein component catalyzes the electron flow from NADPH -&gt; FAD -&gt; FMN to the hemoprotein component. This Yersinia pseudotuberculosis serotype I (strain IP32953) protein is Sulfite reductase [NADPH] flavoprotein alpha-component.